Reading from the N-terminus, the 148-residue chain is Endothelial differentiation-related factor 1 (148 aa).

Ala-2 carries the N-acetylalanine modification. A Phosphoserine modification is found at Ser-4. N6-methyllysine is present on Lys-25. The tract at residues Arg-34–Glu-67 is disordered. Positions Asp-37–Arg-113 are interaction with NR5A2, PPARG and NR1H3. Residues Gln-48 to Thr-58 are compositionally biased toward polar residues. The interaction with TBP and NR5A1 stretch occupies residues His-69–Asp-108. Residues Ile-81–Lys-88 carry the IQ motif motif. An HTH cro/C1-type domain is found at Ile-81–Lys-135. The H-T-H motif DNA-binding region spans Gln-92–Ser-111.

Interacts with TBP and the transcription factor IID (TFIID) complex, NR5A2, NR1H3 and PPARG. Interaction with TBP is regulated by phosphorylation. Binds NR5A1, ATF1, FOS and JUN via their conserved basic region. Binding to calmodulin is regulated by calcium and phosphorylation of the IQ motif. Post-translationally, phosphorylated. Expressed in brain, liver, kidney and heart (at protein level). Also expressed in testis.

The protein resides in the cytoplasm. It is found in the nucleus. Its function is as follows. Transcriptional coactivator stimulating NR5A1 and ligand-dependent NR1H3/LXRA and PPARG transcriptional activities. Enhances the DNA-binding activity of ATF1, ATF2, CREB1 and NR5A1. Regulates nitric oxid synthase activity probably by sequestering calmodulin in the cytoplasm. Might function in endothelial cells differentiation, hormone-induced cardiomyocytes hypertrophy and lipid metabolism. The polypeptide is Endothelial differentiation-related factor 1 (Edf1) (Mus musculus (Mouse)).